Here is a 559-residue protein sequence, read N- to C-terminus: Oxygen-dependent choline dehydrogenase (559 aa).

4 to 33 (DYIIIGAGSAGNVLATRLTEDSDVTVLLLE) is an FAD binding site. Residue H473 is the Proton acceptor of the active site.

Belongs to the GMC oxidoreductase family. It depends on FAD as a cofactor.

It carries out the reaction choline + A = betaine aldehyde + AH2. The catalysed reaction is betaine aldehyde + NAD(+) + H2O = glycine betaine + NADH + 2 H(+). The protein operates within amine and polyamine biosynthesis; betaine biosynthesis via choline pathway; betaine aldehyde from choline (cytochrome c reductase route): step 1/1. Functionally, involved in the biosynthesis of the osmoprotectant glycine betaine. Catalyzes the oxidation of choline to betaine aldehyde and betaine aldehyde to glycine betaine at the same rate. The chain is Oxygen-dependent choline dehydrogenase from Cronobacter sakazakii (strain ATCC BAA-894) (Enterobacter sakazakii).